Reading from the N-terminus, the 503-residue chain is Aspartyl/glutamyl-tRNA(Asn/Gln) amidotransferase subunit B (503 aa).

Belongs to the GatB/GatE family. GatB subfamily. Heterotrimer of A, B and C subunits.

The catalysed reaction is L-glutamyl-tRNA(Gln) + L-glutamine + ATP + H2O = L-glutaminyl-tRNA(Gln) + L-glutamate + ADP + phosphate + H(+). It catalyses the reaction L-aspartyl-tRNA(Asn) + L-glutamine + ATP + H2O = L-asparaginyl-tRNA(Asn) + L-glutamate + ADP + phosphate + 2 H(+). Functionally, allows the formation of correctly charged Asn-tRNA(Asn) or Gln-tRNA(Gln) through the transamidation of misacylated Asp-tRNA(Asn) or Glu-tRNA(Gln) in organisms which lack either or both of asparaginyl-tRNA or glutaminyl-tRNA synthetases. The reaction takes place in the presence of glutamine and ATP through an activated phospho-Asp-tRNA(Asn) or phospho-Glu-tRNA(Gln). This is Aspartyl/glutamyl-tRNA(Asn/Gln) amidotransferase subunit B from Ruegeria pomeroyi (strain ATCC 700808 / DSM 15171 / DSS-3) (Silicibacter pomeroyi).